The chain runs to 615 residues: Chaperone protein HscA (615 aa).

This sequence belongs to the heat shock protein 70 family.

Functionally, chaperone involved in the maturation of iron-sulfur cluster-containing proteins. Has a low intrinsic ATPase activity which is markedly stimulated by HscB. Involved in the maturation of IscU. The polypeptide is Chaperone protein HscA (Xenorhabdus nematophila (strain ATCC 19061 / DSM 3370 / CCUG 14189 / LMG 1036 / NCIMB 9965 / AN6)).